A 59-amino-acid polypeptide reads, in one-letter code: Large ribosomal subunit protein bL32 (59 aa).

Basic residues predominate over residues 1 to 15 (MANPKRKQSKRRSAN). Residues 1-48 (MANPKRKQSKRRSANRRAANAFIAPEFAKDPTDGSAFRPHRVNPKNGM) form a disordered region.

Belongs to the bacterial ribosomal protein bL32 family.

This chain is Large ribosomal subunit protein bL32, found in Opitutus terrae (strain DSM 11246 / JCM 15787 / PB90-1).